The chain runs to 315 residues: tRNA U34 carboxymethyltransferase (315 aa).

Residues K79, W93, K98, G117, 142–144, 169–170, Y193, and R307 each bind carboxy-S-adenosyl-L-methionine; these read DPS and VE.

The protein belongs to the class I-like SAM-binding methyltransferase superfamily. CmoB family. In terms of assembly, homotetramer.

The catalysed reaction is carboxy-S-adenosyl-L-methionine + 5-hydroxyuridine(34) in tRNA = 5-carboxymethoxyuridine(34) in tRNA + S-adenosyl-L-homocysteine + H(+). Functionally, catalyzes carboxymethyl transfer from carboxy-S-adenosyl-L-methionine (Cx-SAM) to 5-hydroxyuridine (ho5U) to form 5-carboxymethoxyuridine (cmo5U) at position 34 in tRNAs. The polypeptide is tRNA U34 carboxymethyltransferase (Helicobacter hepaticus (strain ATCC 51449 / 3B1)).